The chain runs to 420 residues: Dynein axonemal assembly factor 4 (420 aa).

The region spanning 3 to 87 (LQVSDYSWQQ…KEAAMWETLS (85 aa)) is the CS domain. The segment at 7–103 (DYSWQQTKTA…ETMQRIREKS (97 aa)) is mediates interaction with ESR1 and STUB1. 3 TPR repeats span residues 290–323 (PEWLKDKGNKLFATENYLAAINAYNLAIRLNNKM), 324–357 (PLLYLNRAACHLKLKNLHKAIEDSSKALELLMPP), and 366–399 (MKAHVRRGTAFCQLELYVEGLQDYEAALKIDPSN).

Interacts with ZMYND10. Interacts with STUB1. Interacts with ESR1 and ESR2. Interacts with DNAAF2. Interacts with CCT3, CCT4, CCT5 and CCT8. Interacts with DNAAF6/PIH1D3.

It is found in the nucleus. The protein localises to the cytoplasm. The protein resides in the cell projection. Its subcellular location is the neuron projection. It localises to the dynein axonemal particle. Functionally, involved in neuronal migration during development of the cerebral neocortex. May regulate the stability and proteasomal degradation of the estrogen receptors that play an important role in neuronal differentiation, survival and plasticity. Axonemal dynein assembly factor required for ciliary motility. The protein is Dynein axonemal assembly factor 4 of Pongo pygmaeus (Bornean orangutan).